The primary structure comprises 256 residues: Nuclear shuttle protein (256 aa).

Positions 18–39 match the Bipartite nuclear localization signal motif; it reads NITNRYPIKRKYVAGHTRPCVR. The Nuclear localization signal signature appears at 81–96; the sequence is SRGPSGDGRSRDYIKL. Positions 150–187 are interaction with Arabidopsis thaliana NSI protein; sequence ELFGPYSACYVNLRLLNNQQHRYRVLHSVKRFVSSSGD.

The protein belongs to the begomovirus nuclear shuttle protein family. As to quaternary structure, binds to single-stranded and double-stranded viral DNA. Interacts with the host nuclear shuttle interacting (NSI) protein. This interaction may allow NSP to recruit NSI monomers to the viral genome and thus regulate nuclear export of viral genome by NSP.

It localises to the host nucleus. The protein localises to the host cytoplasm. It is found in the host cell membrane. Its function is as follows. Binds to the genomic viral ssDNA, shuttles it into and out of the cell nucleus. Begomoviruses use 2 proteins to transport their DNA from cell to cell. The nuclear shuttle protein (NSP) shuttles it between nucleus and cytoplasm and the movement protein (MP) probably transports the DNA-NSP complex to the cell periphery and facilitates movement across the cell wall. The sequence is that of Nuclear shuttle protein from Hewittia sublobata (Coralbush).